Here is a 767-residue protein sequence, read N- to C-terminus: Receptor-type tyrosine-protein phosphatase-like ida-1 (767 aa).

The signal sequence occupies residues 1-19 (MRFFHSIIVLLFSISTGSA). The Lumenal portion of the chain corresponds to 20–398 (FLLYGCNLSE…SLPVESSERD (379 aa)). N-linked (GlcNAc...) asparagine glycans are attached at residues asparagine 26 and asparagine 146. The helical transmembrane segment at 399–419 (WLLMPVLFVCAFTVTALGLVA) threads the bilayer. At 420–767 (AVQIARSRRH…NHLLKSIATK (348 aa)) the chain is on the cytoplasmic side. Residues 527–756 (SQNRTILPFD…KLVYGCVAQE (230 aa)) enclose the Tyrosine-protein phosphatase domain.

The protein belongs to the protein-tyrosine phosphatase family. Receptor class 8 subfamily. Post-translationally, proteolytically cleaved probably at a dibasic consensus sequence by egl-3. In hermaphrodites specifically expressed in neurons and in particular in the head nerve ring (ADE, ALA, ASI, ASK, AUA, ASG, AVH and AVJ neurons), in the ventral nerve cord, pre-anal ganglia (PVP neuron), in the tail (PHA, PHB and PHC neurons) and in vulval motor neurons VC and HSN and the vulval uv1 cells. In males, also expressed in neurons anterior to the nerve ring and male-specific neurons in the tail.

Its subcellular location is the cytoplasmic vesicle membrane. It localises to the perikaryon. The protein resides in the cell projection. The protein localises to the axon. It is found in the dendrite. In terms of biological role, regulates dense-core vesicle (DCV) trafficking and/or secretion. Probably by controlling DCV trafficking, plays a role in the AVG neuron-mediated formation of the right axon tract of the ventral nerve cord. Involved in locomotion by regulating acetylcholine release. Probably by controlling the secretion of FLP neuropeptides, regulates the turning step of male mating behavior. Plays a role in preventing dauer formation. This chain is Receptor-type tyrosine-protein phosphatase-like ida-1, found in Caenorhabditis elegans.